A 1273-amino-acid chain; its full sequence is Kinesin-like protein KIN-14A (1273 aa).

A disordered region spans residues 1–52; sequence MADQRSKTNRWNWEVSGFEPRKSSSNASFAESTGHRTTGPLLRRNSISTPSL. Positions 59–89 form a coiled coil; the sequence is ASKVNGLKEKVKLAKEDYLELRQEATDLQEY. Residues 142 to 456 enclose the Kinesin motor domain; the sequence is NIKVFCRARP…LNYAARARNT (315 aa). 223-230 serves as a coordination point for ATP; that stretch reads GQTNAGKT. Coiled-coil stretches lie at residues 466–511, 559–595, and 627–657; these read IKKW…CVLL, QLDQ…AVRS, and TKKL…RLTE. Disordered regions lie at residues 827-847 and 1136-1157; these read KPNT…RSPV and QEDT…SISS. A compositionally biased stretch (low complexity) spans 830-846; the sequence is TGRSKSTSRGSSPGRSP.

It belongs to the TRAFAC class myosin-kinesin ATPase superfamily. Kinesin family. KIN-14 subfamily. In terms of assembly, homodimer and heterodimer with KCA2. Interacts with CDKA-1. Interacts with AL1, a geminivirus (TGMV) protein essential for viral replication. Interacts with LUE1/KSS. In terms of processing, part of the phosphorylation is not CDK-dependent. Widely expressed.

It localises to the nucleus. The protein localises to the cytoplasm. It is found in the cytoskeleton. The protein resides in the spindle. Its subcellular location is the chromosome. It localises to the cell membrane. The protein localises to the phragmoplast. Kinesin-like protein required for chloroplast movements and anchor to the plasma membrane. Mediates chloroplast movement via chloroplast actin (cp-actin) filaments. Required for the chloroplast avoidance response under high intensity blue light. Mediates redundantly with CHUP1 the nuclear avoidance response under high intensity blue light. May act as a mitotic kinesin. Probably involved in division plane determination. This chain is Kinesin-like protein KIN-14A, found in Arabidopsis thaliana (Mouse-ear cress).